Consider the following 212-residue polypeptide: NAD(P)H-hydrate epimerase (212 aa).

The 202-residue stretch at 11 to 212 folds into the YjeF N-terminal domain; it reads MRHYDSYTIN…ANDMGTYAVD (202 aa). Residue 60 to 64 coordinates (6S)-NADPHX; it reads NNGGD. K(+)-binding residues include N61 and D123. (6S)-NADPHX is bound by residues 127–133, Y138, and D156; that span reads GIGIDRA. S159 is a K(+) binding site.

The protein belongs to the NnrE/AIBP family. The cofactor is K(+).

The enzyme catalyses (6R)-NADHX = (6S)-NADHX. The catalysed reaction is (6R)-NADPHX = (6S)-NADPHX. Catalyzes the epimerization of the S- and R-forms of NAD(P)HX, a damaged form of NAD(P)H that is a result of enzymatic or heat-dependent hydration. This is a prerequisite for the S-specific NAD(P)H-hydrate dehydratase to allow the repair of both epimers of NAD(P)HX. The protein is NAD(P)H-hydrate epimerase of Limosilactobacillus reuteri (strain ATCC 55730 / SD2112) (Lactobacillus reuteri).